A 197-amino-acid polypeptide reads, in one-letter code: Holliday junction branch migration complex subunit RuvA (197 aa).

Positions 1 to 64 (MIGRISGLLL…EDAHLLFGFA (64 aa)) are domain I. Residues 65–142 (TEGERQAFRQ…DLGVSAIPGA (78 aa)) form a domain II region. The segment at 143 to 153 (AGARRPSTMGS) is flexible linker. Positions 153–197 (SDVLNALLSLGYNDREANWAVSQLSVDLSVSDGIRQALKFLSKEK) are domain III.

Belongs to the RuvA family. In terms of assembly, homotetramer. Forms an RuvA(8)-RuvB(12)-Holliday junction (HJ) complex. HJ DNA is sandwiched between 2 RuvA tetramers; dsDNA enters through RuvA and exits via RuvB. An RuvB hexamer assembles on each DNA strand where it exits the tetramer. Each RuvB hexamer is contacted by two RuvA subunits (via domain III) on 2 adjacent RuvB subunits; this complex drives branch migration. In the full resolvosome a probable DNA-RuvA(4)-RuvB(12)-RuvC(2) complex forms which resolves the HJ.

It is found in the cytoplasm. Its function is as follows. The RuvA-RuvB-RuvC complex processes Holliday junction (HJ) DNA during genetic recombination and DNA repair, while the RuvA-RuvB complex plays an important role in the rescue of blocked DNA replication forks via replication fork reversal (RFR). RuvA specifically binds to HJ cruciform DNA, conferring on it an open structure. The RuvB hexamer acts as an ATP-dependent pump, pulling dsDNA into and through the RuvAB complex. HJ branch migration allows RuvC to scan DNA until it finds its consensus sequence, where it cleaves and resolves the cruciform DNA. The polypeptide is Holliday junction branch migration complex subunit RuvA (Nitrosospira multiformis (strain ATCC 25196 / NCIMB 11849 / C 71)).